The primary structure comprises 243 residues: UPF0758 protein Cyan7425_1778 (243 aa).

The MPN domain maps to 112–235; it reads TIINDPAVAA…FRSLRQTTKL (124 aa). 3 residues coordinate Zn(2+): His-184, His-186, and Asp-197. A JAMM motif motif is present at residues 184–197; it reads HNHPSGNVEPSPED.

The protein belongs to the UPF0758 family.

The chain is UPF0758 protein Cyan7425_1778 from Cyanothece sp. (strain PCC 7425 / ATCC 29141).